The chain runs to 341 residues: tRNA N6-adenosine threonylcarbamoyltransferase (341 aa).

His111 and His115 together coordinate Fe cation. Residues 134–138 (LVSGG), Asp167, Gly180, and Asn276 contribute to the substrate site. Asp304 lines the Fe cation pocket.

This sequence belongs to the KAE1 / TsaD family. The cofactor is Fe(2+).

The protein localises to the cytoplasm. It catalyses the reaction L-threonylcarbamoyladenylate + adenosine(37) in tRNA = N(6)-L-threonylcarbamoyladenosine(37) in tRNA + AMP + H(+). Required for the formation of a threonylcarbamoyl group on adenosine at position 37 (t(6)A37) in tRNAs that read codons beginning with adenine. Is involved in the transfer of the threonylcarbamoyl moiety of threonylcarbamoyl-AMP (TC-AMP) to the N6 group of A37, together with TsaE and TsaB. TsaD likely plays a direct catalytic role in this reaction. The chain is tRNA N6-adenosine threonylcarbamoyltransferase from Pseudomonas fluorescens (strain Pf0-1).